The chain runs to 75 residues: Tautomerase PptA (75 aa).

The Proton acceptor; via imino nitrogen role is filled by proline 2.

This sequence belongs to the 4-oxalocrotonate tautomerase family. PptA subfamily. As to quaternary structure, homodimer.

It is found in the cytoplasm. The sequence is that of Tautomerase PptA from Escherichia coli O127:H6 (strain E2348/69 / EPEC).